The sequence spans 565 residues: SRSF protein kinase 3 (565 aa).

Positions 1–44 (MSANAGGSGSVDCGGSSSSSQTSCGPESSGSELTPATPAPRLLQ) are disordered. The segment covering 10 to 31 (SVDCGGSSSSSQTSCGPESSGS) has biased composition (low complexity). Position 49 is a phosphoserine (S49). In terms of domain architecture, Protein kinase spans 78 to 563 (YHVVRKLGWG…AADCLQHPWL (486 aa)). Residues 84 to 92 (LGWGHFSTV) and K107 each bind ATP. D211 (proton acceptor) is an active-site residue. The span at 236-253 (WQQSGAQPPSRSTVSTAP) shows a compositional bias: polar residues. 2 disordered regions span residues 236-280 (WQQS…KRLL) and 295-350 (AAVQ…QTSG). Basic residues predominate over residues 262–277 (SKNKRKKMRRKRKQQK). A compositionally biased stretch (low complexity) spans 325–350 (AGPSPASSSPVPGGERSLSPSSQTSG). The residue at position 328 (S328) is a Phosphoserine.

It belongs to the protein kinase superfamily. CMGC Ser/Thr protein kinase family. In terms of tissue distribution, exclusively expressed in skeletal and heart muscle.

Its subcellular location is the nucleus. The protein localises to the cytoplasm. It catalyses the reaction L-seryl-[protein] + ATP = O-phospho-L-seryl-[protein] + ADP + H(+). It carries out the reaction L-threonyl-[protein] + ATP = O-phospho-L-threonyl-[protein] + ADP + H(+). Functionally, serine/arginine-rich protein-specific kinase which specifically phosphorylates its substrates at serine residues located in regions rich in arginine/serine dipeptides, known as RS domains. Phosphorylates the SR splicing factor SRSF1 and the lamin-B receptor (LBR) in vitro. Required for normal muscle development. The chain is SRSF protein kinase 3 (Srpk3) from Mus musculus (Mouse).